We begin with the raw amino-acid sequence, 388 residues long: MTASVLLHPRWIEPTVMFLYDNGGGLVADELNKNMEGAAAAAAAAAAAAAAGAGGGGFPHPAAAAAGGNFSVAAAAAAAAAAAANQCRNLMAHPAPLAPGAASAYSSAPGEAPPSAAAAAAAAAAAAAAAAAASSSGGPGPAGPAGAEAAKQCSPCSAAAQSSSGPAALPYGYFGSGYYPCARMGPHPNAIKSCAQPASAAAAAAFADKYMDTAGPAAEEFSSRAKEFAFYHQGYAAGPYHHHQPMPGYLDMPVVPGLGGPGESRHEPLGLPMESYQPWALPNGWNGQMYCPKEQAQPPHLWKSTLPDVVSHPSDASSYRRGRKKRVPYTKVQLKELEREYATNKFITKDKRRRISATTNLSERQVTIWFQNRRVKEKKVINKLKTTS.

The homeobox DNA-binding region spans 322–381; the sequence is GRKKRVPYTKVQLKELEREYATNKFITKDKRRRISATTNLSERQVTIWFQNRRVKEKKVI.

It belongs to the Abd-B homeobox family. As to quaternary structure, binds DNA as a homodimer. Interacts with MEIS1, MEIS2 and MEIS3.

It is found in the nucleus. Sequence-specific, AT-rich binding transcription factor which is part of a developmental regulatory system that provides cells with specific positional identities on the anterior-posterior axis. Its function is as follows. Sequence-specific transcription factor which is part of a developmental regulatory system that provides cells with specific positional identities on the anterior-posterior axis. The sequence is that of Homeobox protein Hox-A13 (HOXA13) from Homo sapiens (Human).